The sequence spans 504 residues: Anaerobic nitric oxide reductase transcription regulator NorR (504 aa).

Aspartate 57 carries the post-translational modification 4-aspartylphosphate. Residues 187-416 (MIGLSPGMTQ…LEHAIHRAVV (230 aa)) form the Sigma-54 factor interaction domain. Residues 215-222 (GETGTGKE) and 278-287 (ADNGTLFLDE) each bind ATP. Residues 479 to 498 (WAACARMLETDVANLHRLAK) constitute a DNA-binding region (H-T-H motif).

It functions in the pathway nitrogen metabolism; nitric oxide reduction. In terms of biological role, required for the expression of anaerobic nitric oxide (NO) reductase, acts as a transcriptional activator for at least the norVW operon. Activation also requires sigma-54. This chain is Anaerobic nitric oxide reductase transcription regulator NorR, found in Escherichia coli O157:H7.